A 459-amino-acid polypeptide reads, in one-letter code: Peptidyl-prolyl cis-trans isomerase FKBP4 (459 aa).

The residue at position 1 (methionine 1) is an N-acetylmethionine; in peptidyl-prolyl cis-trans isomerase FKBP4; alternate. A disordered region spans residues 1–22 (MTAEETKAAESGAQSAPLRLEG). Residue threonine 2 is modified to N-acetylthreonine; in peptidyl-prolyl cis-trans isomerase FKBP4, N-terminally processed; partial. Residues 50 to 138 (GDRVFVHYTG…VFEVELFEFK (89 aa)) form the PPIase FKBP-type 1 domain. Threonine 143 carries the post-translational modification Phosphothreonine. Residues 167–253 (GALVEVALEG…KYEIHLKSFE (87 aa)) form the PPIase FKBP-type 2 domain. Tyrosine 220 bears the Phosphotyrosine mark. Residues 267–400 (LEQSTIVKER…AQLVVCQQRI (134 aa)) form an interaction with tubulin region. TPR repeat units follow at residues 270-303 (STIVKERGTVYFKEGKYKQAVLQYKKIVSWLEYE), 319-352 (LASHLNLAMCHLKLQAFSAAIENCNKALELDSNN), and 354-386 (KGLFRRGEAHLAVNDFDLARADFQKVLQLYPSN). Lysine 282 carries the post-translational modification N6-acetyllysine. An Omega-N-methylarginine modification is found at arginine 373. Residues 423–459 (TKAKATVAAGDQPADAEMRDEPKNDVAGGQPQVEAEA) form a disordered region.

As to quaternary structure, homodimer. Interacts with GLMN. Associates with HSP90AA1 and HSP70 in steroid hormone receptor complexes. Also interacts with peroxisomal phytanoyl-CoA alpha-hydroxylase (PHYH). Interacts with NR3C1 and dynein. Interacts with HSF1 in the HSP90 complex. Associates with tubulin. Interacts with MAPT/TAU. Interacts (via TPR domain) with S100A1, S100A2 and S100A6; the interaction is Ca(2+) dependent. Interaction with S100A1 and S100A2 (but not with S100A6) leads to inhibition of FKBP4-HSP90 interaction. Interacts with dynein; causes partially NR3C1 transport to the nucleus.

It localises to the cytoplasm. The protein localises to the cytosol. Its subcellular location is the mitochondrion. It is found in the nucleus. The protein resides in the cytoskeleton. It catalyses the reaction [protein]-peptidylproline (omega=180) = [protein]-peptidylproline (omega=0). Its activity is regulated as follows. Inhibited by FK506. Its function is as follows. Immunophilin protein with PPIase and co-chaperone activities. Component of unligated steroid receptors heterocomplexes through interaction with heat-shock protein 90 (HSP90). May play a role in the intracellular trafficking of heterooligomeric forms of steroid hormone receptors between cytoplasm and nuclear compartments. The isomerase activity controls neuronal growth cones via regulation of TRPC1 channel opening. Also acts as a regulator of microtubule dynamics by inhibiting MAPT/TAU ability to promote microtubule assembly. May have a protective role against oxidative stress in mitochondria. The protein is Peptidyl-prolyl cis-trans isomerase FKBP4 (FKBP4) of Bos taurus (Bovine).